The following is a 773-amino-acid chain: Lon protease homolog 2, peroxisomal (773 aa).

Positions 9 to 198 (LPVILVTSGV…MCIKWMNEKK (190 aa)) constitute a Lon N-terminal domain. 336–343 (GPPGIGKT) provides a ligand contact to ATP. Residues 587-766 (PLPAGVCFGL…EDVIGAMMDK (180 aa)) enclose the Lon proteolytic domain. Active-site residues include serine 672 and lysine 715. The short motif at 771–773 (AKL) is the Microbody targeting signal element.

The protein belongs to the peptidase S16 family.

It localises to the peroxisome matrix. It catalyses the reaction Hydrolysis of proteins in presence of ATP.. Functionally, ATP-dependent serine protease that mediates the selective degradation of misfolded and unassembled polypeptides in the peroxisomal matrix. Necessary for type 2 peroxisome targeting signal (PTS2)-containing protein processing and facilitates peroxisome matrix protein import. The polypeptide is Lon protease homolog 2, peroxisomal (Caenorhabditis elegans).